Consider the following 572-residue polypeptide: Urease subunit alpha (572 aa).

A Urease domain is found at 134–572 (GGIDSHIHFI…LPLAQRYFLF (439 aa)). Histidine 139, histidine 141, and lysine 222 together coordinate Ni(2+). Lysine 222 is subject to N6-carboxylysine. Histidine 224 contributes to the substrate binding site. Ni(2+)-binding residues include histidine 251 and histidine 277. The active-site Proton donor is the histidine 325. Residue aspartate 365 participates in Ni(2+) binding.

It belongs to the metallo-dependent hydrolases superfamily. Urease alpha subunit family. Heterotrimer of UreA (gamma), UreB (beta) and UreC (alpha) subunits. Three heterotrimers associate to form the active enzyme. Ni cation serves as cofactor. Carboxylation allows a single lysine to coordinate two nickel ions.

It localises to the cytoplasm. The catalysed reaction is urea + 2 H2O + H(+) = hydrogencarbonate + 2 NH4(+). It participates in nitrogen metabolism; urea degradation; CO(2) and NH(3) from urea (urease route): step 1/1. The protein is Urease subunit alpha of Paracidovorax citrulli (strain AAC00-1) (Acidovorax citrulli).